Consider the following 258-residue polypeptide: Rho-related GTP-binding protein RhoU (258 aa).

The interval 1–45 is disordered; sequence MPPQQGDPAFPDRCEAPPVPPRRERGGRGGRGPGEPGGRGRAGGA. The span at 10–27 shows a compositional bias: basic and acidic residues; that stretch reads FPDRCEAPPVPPRRERGG. The span at 29–45 shows a compositional bias: gly residues; sequence GGRGPGEPGGRGRAGGA. GTP-binding positions include 56 to 63, 103 to 107, and 161 to 164; these read GDGAVGKT, DTAGQ, and TQSD. Residues Lys177 and Lys248 each participate in a glycyl lysine isopeptide (Lys-Gly) (interchain with G-Cter in ubiquitin) cross-link. Cys256 is lipidated: S-palmitoyl cysteine.

This sequence belongs to the small GTPase superfamily. Rho family. As to quaternary structure, interacts with PAK1. Interacts with PAK3. Interacts with ARHGAP30 in a GTP-independent manner. In its GTP-loaded conformation, interacts with ARHGAP31. Interacts with PTK2B/PYK2. Interacts with PAK4; the interaction is PAK4 kinase activity-independent and protects RHOU from ubiquitination. Requires Mg(2+) as cofactor. Post-translationally, ubiquitinated. 'Lys-48'-linked ubiquitination at Lys-177 and Lys-248 by the ECS(RAB40A) complex leading to its degradation. In terms of processing, tyrosine phosphorylated by SRC in response to PTK2B/PYK2 activation. Ubiquitously expressed in all tissues examined. Expressed at high levels in the stomach, small intestine, brain, skeletal muscle and placenta.

It is found in the cell membrane. It localises to the golgi apparatus membrane. The protein resides in the cell junction. Its subcellular location is the focal adhesion. The protein localises to the cell projection. It is found in the podosome. Binds to and activates protein kinase PAK1. Plays a role in the regulation of cell morphology, cytoskeletal organization and focal adhesion assembly during cell migration. Also stimulates quiescent cells to reenter the cell cycle. Has no detectable GTPase activity but its high intrinsic guanine nucleotide exchange activity suggests it is constitutively GTP-bound. The chain is Rho-related GTP-binding protein RhoU from Homo sapiens (Human).